A 181-amino-acid chain; its full sequence is Ferritin BfrB (181 aa).

One can recognise a Ferritin-like diiron domain in the interval 5-150 (GALDTKFHAL…TLVRIADRAG (146 aa)). An Isoglutamyl lysine isopeptide (Lys-Gln) (interchain with Q-Cter in protein Pup) cross-link involves residue lysine 10. Positions 22, 55, 58, 99, and 132 each coordinate Fe cation.

Belongs to the ferritin family. Prokaryotic subfamily. In terms of assembly, homooligomer of 24 subunits that are packed together to form an approximately spherical molecule with a central cavity, in which large amounts of iron can be stored.

It carries out the reaction 4 Fe(2+) + O2 + 4 H(+) = 4 Fe(3+) + 2 H2O. Its function is as follows. Iron-storage protein that displays ferroxidase activity, catalyzing the oxidation of Fe(2+) ions into Fe(3+) ions, that can then be deposited as a ferric-oxide mineral core within the central cavity of the protein complex. The chain is Ferritin BfrB (bfrB) from Mycolicibacterium smegmatis (strain ATCC 700084 / mc(2)155) (Mycobacterium smegmatis).